Reading from the N-terminus, the 174-residue chain is Male-enhanced antigen 1 (174 aa).

Disordered regions lie at residues 1–77 and 94–123; these read MAAV…PVGD and LHLP…IPMD. 3 stretches are compositionally biased toward acidic residues: residues 38–48, 65–77, and 101–110; these read SSEEPEEEQEE, PEQE…PVGD, and LESEDEDEEG. A Phosphoserine modification is found at S103.

Functionally, may play an important role in spermatogenesis and/or testis development. This is Male-enhanced antigen 1 (MEA1) from Sus scrofa (Pig).